A 634-amino-acid polypeptide reads, in one-letter code: Threonine--tRNA ligase (634 aa).

A TGS domain is found at 1–61; sequence MFEVKLKDGS…DSDCEVQFVK (61 aa). The tract at residues 242–532 is catalytic; that stretch reads DHRKIGKEMG…LIEHYAGKFP (291 aa). Residues C333, H384, and H509 each coordinate Zn(2+).

It belongs to the class-II aminoacyl-tRNA synthetase family. In terms of assembly, homodimer. Zn(2+) serves as cofactor.

Its subcellular location is the cytoplasm. The enzyme catalyses tRNA(Thr) + L-threonine + ATP = L-threonyl-tRNA(Thr) + AMP + diphosphate + H(+). Functionally, catalyzes the attachment of threonine to tRNA(Thr) in a two-step reaction: L-threonine is first activated by ATP to form Thr-AMP and then transferred to the acceptor end of tRNA(Thr). Also edits incorrectly charged L-seryl-tRNA(Thr). The polypeptide is Threonine--tRNA ligase (Finegoldia magna (strain ATCC 29328 / DSM 20472 / WAL 2508) (Peptostreptococcus magnus)).